The sequence spans 303 residues: Signal recognition particle receptor FtsY (303 aa).

GTP-binding positions include 108–115 (GVNGVGKT), 190–194 (DTAGR), and 254–257 (TKLD).

Belongs to the GTP-binding SRP family. FtsY subfamily. Part of the signal recognition particle protein translocation system, which is composed of SRP and FtsY. SRP is a ribonucleoprotein composed of Ffh and a 4.5S RNA molecule.

The protein resides in the cell inner membrane. Its subcellular location is the cytoplasm. It carries out the reaction GTP + H2O = GDP + phosphate + H(+). Its function is as follows. Involved in targeting and insertion of nascent membrane proteins into the cytoplasmic membrane. Acts as a receptor for the complex formed by the signal recognition particle (SRP) and the ribosome-nascent chain (RNC). Interaction with SRP-RNC leads to the transfer of the RNC complex to the Sec translocase for insertion into the membrane, the hydrolysis of GTP by both Ffh and FtsY, and the dissociation of the SRP-FtsY complex into the individual components. The polypeptide is Signal recognition particle receptor FtsY (Rickettsia typhi (strain ATCC VR-144 / Wilmington)).